Reading from the N-terminus, the 208-residue chain is Putative dioxygenase RF_0617 (208 aa).

It belongs to the intradiol ring-cleavage dioxygenase family.

The polypeptide is Putative dioxygenase RF_0617 (Rickettsia felis (strain ATCC VR-1525 / URRWXCal2) (Rickettsia azadi)).